A 233-amino-acid polypeptide reads, in one-letter code: Small ribosomal subunit protein uS3 (233 aa).

The 69-residue stretch at 39–107 folds into the KH type-2 domain; that stretch reads VRKYLTKELE…PAQINIAEVR (69 aa).

The protein belongs to the universal ribosomal protein uS3 family. In terms of assembly, part of the 30S ribosomal subunit. Forms a tight complex with proteins S10 and S14.

Its function is as follows. Binds the lower part of the 30S subunit head. Binds mRNA in the 70S ribosome, positioning it for translation. This chain is Small ribosomal subunit protein uS3, found in Pectobacterium carotovorum subsp. carotovorum (strain PC1).